We begin with the raw amino-acid sequence, 675 residues long: Rho GTPase-activating protein 40 (675 aa).

Disordered regions lie at residues 95–118 and 187–218; these read RDEL…EAES and KMSS…PGGL. A compositionally biased stretch (acidic residues) spans 103–116; it reads SGGNEGQLPEEGEA. In terms of domain architecture, Rho-GAP spans 323-522; the sequence is VPLDSLLEAD…IMVHYQDLLW (200 aa).

Its function is as follows. GTPase activator for the Rho-type GTPases by converting them to an inactive GDP-bound state. The polypeptide is Rho GTPase-activating protein 40 (Homo sapiens (Human)).